The primary structure comprises 239 residues: Endoglucanase A (239 aa).

The first 16 residues, 1–16 (MKLSMTLSLFAATAMG), serve as a signal peptide directing secretion.

This sequence belongs to the glycosyl hydrolase 12 (cellulase H) family.

It carries out the reaction Endohydrolysis of (1-&gt;4)-beta-D-glucosidic linkages in cellulose, lichenin and cereal beta-D-glucans.. Functionally, has carboxylmethylcellulase activity. This Aspergillus kawachii (strain NBRC 4308) (White koji mold) protein is Endoglucanase A (cekA).